The sequence spans 501 residues: MSTPLMVLGTSSGAGKSLMSAALCRLLLRQGETPIPFKGQNMSNNAWVDESGGEMAYSQALQAWAAGLKPQCAMNPVLLKPQGDSTSEVIHLGQSVGTARAETYYEQWFRPGWSVIREALKDLQCSYTHGRLVLEGAGSPVEVNLQRRDLTNLRLAQFLRARCLLVADIERGGVFAQIMGTLSLLKPVEKQLIRGLLINRFRGRRELFDEGRDWLEAETGIPVIGVMPWLEELFPPEDSLDLLERRGKKNDAEIEIAVLKLPSLSNFSDLDPLEAEPTVQLRWVEPGTFLGMPDAVIIPGSKQTLRDLNSLNRSGLGSQLQTYAQSGGHVFGICGGMQMLGRTLADPLGLEGVTTTDPSSSMAGLNLLPLDTVFKRNKALSQCQRITQWPDNAKVKGFELHHGNSQLIQGSHESVLPMADDPSMGWVSKNESCGQVAGTYLHGIFENGRWRRLWLNLIRKQKGLADLPTDISNHEQQREQLLNRLADVFEEHVNINPLLGT.

The GATase cobBQ-type domain maps to 253-450; it reads EIEIAVLKLP…LHGIFENGRW (198 aa). Cys334 serves as the catalytic Nucleophile. The active site involves His442.

The protein belongs to the CobB/CobQ family. CobQ subfamily.

It participates in cofactor biosynthesis; adenosylcobalamin biosynthesis. Functionally, catalyzes amidations at positions B, D, E, and G on adenosylcobyrinic A,C-diamide. NH(2) groups are provided by glutamine, and one molecule of ATP is hydrogenolyzed for each amidation. The chain is Cobyric acid synthase from Prochlorococcus marinus (strain MIT 9313).